The chain runs to 402 residues: Putative FBD-associated F-box protein At5g56690 (402 aa).

One can recognise an F-box domain in the interval 1–47 (MAEISGLPDDLLVKILAFLPTKVAISTSVLSKQWRFLWMWLPKLKYD). Positions 349 to 401 (SWSKNQGSVPKCFLNSLETFRVKWYYSEEQEDRDFLSLIFKHARCLKSTSILH) constitute an FBD domain.

The polypeptide is Putative FBD-associated F-box protein At5g56690 (Arabidopsis thaliana (Mouse-ear cress)).